A 293-amino-acid polypeptide reads, in one-letter code: Acetylglutamate kinase (293 aa).

Residues 68–69, R90, and N189 contribute to the substrate site; that span reads GG.

The protein belongs to the acetylglutamate kinase family. ArgB subfamily.

The protein resides in the cytoplasm. It catalyses the reaction N-acetyl-L-glutamate + ATP = N-acetyl-L-glutamyl 5-phosphate + ADP. It participates in amino-acid biosynthesis; L-arginine biosynthesis; N(2)-acetyl-L-ornithine from L-glutamate: step 2/4. Catalyzes the ATP-dependent phosphorylation of N-acetyl-L-glutamate. The chain is Acetylglutamate kinase from Mycobacterium marinum (strain ATCC BAA-535 / M).